The primary structure comprises 244 residues: RAD51-like protein 1 (244 aa).

Interacts with brc-2 and rad-51.

The protein resides in the nucleus. In terms of biological role, has a role in the homologous recombination repair (HRR) of genomic DNA during meiosis. Required for rad-51 recruitment onto ssDNA gaps generated at stalled replication fork barriers. The polypeptide is RAD51-like protein 1 (Caenorhabditis briggsae).